A 103-amino-acid chain; its full sequence is Histone H4 (103 aa).

Residues M1–G14 show a composition bias toward gly residues. Positions M1–R20 are disordered. The DNA-binding element occupies K17–K21.

It belongs to the histone H4 family. As to quaternary structure, the nucleosome is a histone octamer containing two molecules each of H2A, H2B, H3 and H4 assembled in one H3-H4 heterotetramer and two H2A-H2B heterodimers. The octamer wraps approximately 147 bp of DNA.

Its subcellular location is the nucleus. The protein localises to the chromosome. In terms of biological role, core component of nucleosome. Nucleosomes wrap and compact DNA into chromatin, limiting DNA accessibility to the cellular machineries which require DNA as a template. Histones thereby play a central role in transcription regulation, DNA repair, DNA replication and chromosomal stability. DNA accessibility is regulated via a complex set of post-translational modifications of histones, also called histone code, and nucleosome remodeling. The polypeptide is Histone H4 (H41) (Physarum polycephalum (Slime mold)).